The sequence spans 295 residues: Cytidine deaminase (295 aa).

2 CMP/dCMP-type deaminase domains span residues 48–168 (TDNQ…FGPS) and 187–295 (EDDD…YLSL). 89–91 (NME) provides a ligand contact to substrate. A Zn(2+)-binding site is contributed by His102. Glu104 (proton donor) is an active-site residue. Zn(2+) is bound by residues Cys129 and Cys132.

This sequence belongs to the cytidine and deoxycytidylate deaminase family. In terms of assembly, homodimer. Zn(2+) is required as a cofactor.

It carries out the reaction cytidine + H2O + H(+) = uridine + NH4(+). It catalyses the reaction 2'-deoxycytidine + H2O + H(+) = 2'-deoxyuridine + NH4(+). In terms of biological role, this enzyme scavenges exogenous and endogenous cytidine and 2'-deoxycytidine for UMP synthesis. The polypeptide is Cytidine deaminase (Vibrio vulnificus (strain YJ016)).